A 322-amino-acid chain; its full sequence is Mitochondrial thiamine pyrophosphate carrier 1 (322 aa).

Solcar repeat units lie at residues 12–111 (GSKT…VTLA), 122–208 (PAAA…LRVP), and 215–310 (PFGS…VLRL). The next 6 helical transmembrane spans lie at 18–38 (MIAGATAGLIARFVIAPLDVV), 92–108 (LMYVSYSAIQFTTYRSV), 128–148 (FIAGASAGAVATTATYPLDLL), 180–200 (FFQGLGAGVGQIIPYMGIFFA), 221–241 (ATAGVLASVIAKTGIFPFDLI), and 285–302 (GLTVSLFKAAPASAVTMW).

Belongs to the mitochondrial carrier (TC 2.A.29) family.

It is found in the mitochondrion inner membrane. Functionally, mitochondrial transporter that mediates uptake of thiamine pyrophosphate (ThPP) into mitochondria. This Sclerotinia sclerotiorum (strain ATCC 18683 / 1980 / Ss-1) (White mold) protein is Mitochondrial thiamine pyrophosphate carrier 1 (tpc1).